The chain runs to 248 residues: Trihelix transcription factor ENAP2 (248 aa).

Positions 1 to 13 (METTTPQSKSSVS) are enriched in polar residues. Residues 1-20 (METTTPQSKSSVSHRPPLGR) are disordered. Positions 24–113 (WSEEATATLV…RLDVLIGPVV (90 aa)) form a DNA-binding region, MADF. The Nuclear localization signal motif lies at 69–76 (RKKTDLQC). The tract at residues 123–150 (SAPFKNHLNPTGSNSTGSSLEDDDEDDD) is disordered. Over residues 130–141 (LNPTGSNSTGSS) the composition is skewed to polar residues. The stretch at 190-210 (YERIEGKKQQMMIELEKQRME) forms a coiled coil.

Interacts with the Agrobacterium tumefaciens virulence protein F (VirF) in the nucleus. Binds to EIN2 C-terminal region in the presence of ethylene.

It is found in the nucleus. Its subcellular location is the nucleoplasm. Its function is as follows. Probable transcription regulator. Promotes histone acetylation during ethylene signaling in an EIN2-dependent manner, thus regulating positively ethylene-responsive genes. The protein is Trihelix transcription factor ENAP2 of Arabidopsis thaliana (Mouse-ear cress).